The chain runs to 440 residues: MGKLHSKHAAICKARESPEGDSFVVNACLARKGLDDWMVKQKYYCSSSRVDQRDCQQKNNCELSPRDPLDEGYAEGISDEHYRLEVALPPEKTDSCSVEERMQGTEGSATVGPHKQLQFEELECAVSVEEDNRQEWTFTLYDFDNNGKVTREDITSLLHTIYEVVDASVNHSPSSSKTLRVKLSVAPDSSQRWKNCTQTNTDTPNPKHKGEKCIEDSKTSEKKSRAFLRRYHAEHHSQQGCQRHCVDENLERRNHYLDLAGIENYTSRFGTAAPATEPAKPTHATRSSNQSRSRSQEPENGQVHPAHHRRSQTMSTDPPAILTRHTHALRSPKTHRTPPTQASAGRVMRRGAPPPPSVPNQTPPHQSSGPYRRHKQRPKEALHYRALGPSVTSGPVLEKEHVRDLPSLVLYEGGLAQVVQRHEHHHHHEHHHHYHHFYQS.

The N-myristoyl glycine moiety is linked to residue Gly2. The EF-hand domain maps to 129–164 (EEDNRQEWTFTLYDFDNNGKVTREDITSLLHTIYEV). Residues Asp142, Asp144, Asn146, Lys148, and Asp153 each contribute to the Ca(2+) site. Positions 192–204 (RWKNCTQTNTDTP) are enriched in polar residues. Disordered stretches follow at residues 192–221 (RWKN…KTSE), 272–379 (AAPA…QRPK), and 421–440 (RHEH…FYQS). The segment covering 211-221 (EKCIEDSKTSE) has biased composition (basic and acidic residues). Positions 272-293 (AAPATEPAKPTHATRSSNQSRS) are enriched in low complexity. Basic residues predominate over residues 324 to 336 (RHTHALRSPKTHR). The span at 352-362 (APPPPSVPNQT) shows a compositional bias: pro residues. A compositionally biased stretch (basic residues) spans 422-440 (HEHHHHHEHHHHYHHFYQS).

It belongs to the NKD family.

Its subcellular location is the cell membrane. The protein resides in the cytoplasm. In terms of biological role, cell autonomous antagonist of the canonical Wnt signaling pathway. May activate a second Wnt signaling pathway that controls planar cell polarity. The chain is Protein naked cuticle homolog 1 (nkd1) from Danio rerio (Zebrafish).